Here is a 511-residue protein sequence, read N- to C-terminus: Cytochrome P450 71A6 (511 aa).

Helical transmembrane passes span 1 to 15 (ILIA…LFFL) and 61 to 77 (VMQL…ASSP). N-linked (GlcNAc...) asparagine glycans are attached at residues N90, N96, and N167. Residue C450 participates in heme binding.

The protein belongs to the cytochrome P450 family. It depends on heme as a cofactor.

It localises to the membrane. This chain is Cytochrome P450 71A6 (CYP71A6), found in Nepeta racemosa (Catmint).